A 269-amino-acid chain; its full sequence is 3-methyl-2-oxobutanoate hydroxymethyltransferase (269 aa).

Residues Asp-43 and Asp-82 each contribute to the Mg(2+) site. 3-methyl-2-oxobutanoate-binding positions include 43 to 44 (DS), Asp-82, and Lys-110. Glu-112 lines the Mg(2+) pocket. The active-site Proton acceptor is the Glu-179.

Belongs to the PanB family. In terms of assembly, homodecamer; pentamer of dimers. It depends on Mg(2+) as a cofactor.

The protein localises to the cytoplasm. It catalyses the reaction 3-methyl-2-oxobutanoate + (6R)-5,10-methylene-5,6,7,8-tetrahydrofolate + H2O = 2-dehydropantoate + (6S)-5,6,7,8-tetrahydrofolate. The protein operates within cofactor biosynthesis; (R)-pantothenate biosynthesis; (R)-pantoate from 3-methyl-2-oxobutanoate: step 1/2. Its function is as follows. Catalyzes the reversible reaction in which hydroxymethyl group from 5,10-methylenetetrahydrofolate is transferred onto alpha-ketoisovalerate to form ketopantoate. The chain is 3-methyl-2-oxobutanoate hydroxymethyltransferase from Acinetobacter baumannii (strain SDF).